The following is a 234-amino-acid chain: Ras-related protein Rab-20 (234 aa).

5 residues coordinate GTP: G17, K18, T19, D32, and T36. T19 is a binding site for Mg(2+). Short sequence motifs (switch) lie at residues 28-41 and 55-72; these read RRFP…GGAF and DTAG…YCRG. Positions 36 and 55 each coordinate Mg(2+). Residues G58, N113, K114, and D116 each contribute to the GTP site. The segment at 125–144 is disordered; it reads GQEKEECSPNMDAGDRVSPR. The segment covering 126–142 has biased composition (basic and acidic residues); sequence QEKEECSPNMDAGDRVS. 2 residues coordinate GTP: A184 and K185. The segment at 212-234 is disordered; the sequence is RPSHTVDISSHKPPKRTRSGCCA. Basic residues predominate over residues 223-234; the sequence is KPPKRTRSGCCA. S-geranylgeranyl cysteine attachment occurs at residues C232 and C233.

Belongs to the small GTPase superfamily. Rab family. Requires Mg(2+) as cofactor. Low or absent expression in normal pancreas and stronger expression in 15 of 18 exocrine pancreatic adenocarcinomas (at protein level).

It localises to the golgi apparatus. The protein localises to the cytoplasmic vesicle. Its subcellular location is the phagosome. The protein resides in the phagosome membrane. It catalyses the reaction GTP + H2O = GDP + phosphate + H(+). Regulated by guanine nucleotide exchange factors (GEFs) which promote the exchange of bound GDP for free GTP. Regulated by GTPase activating proteins (GAPs) which increase the GTP hydrolysis activity. Inhibited by GDP dissociation inhibitors (GDIs). Functionally, the small GTPases Rab are key regulators of intracellular membrane trafficking, from the formation of transport vesicles to their fusion with membranes. Rabs cycle between an inactive GDP-bound form and an active GTP-bound form that is able to recruit to membranes different sets of downstream effectors directly responsible for vesicle formation, movement, tethering and fusion. RAB20 plays a role in apical endocytosis/recycling. Plays a role in the maturation and acidification of phagosomes that engulf pathogens, such as S.aureus and M.tuberculosis. Plays a role in the fusion of phagosomes with lysosomes. The protein is Ras-related protein Rab-20 of Homo sapiens (Human).